The sequence spans 141 residues: Large ribosomal subunit protein uL16 (141 aa).

Belongs to the universal ribosomal protein uL16 family. As to quaternary structure, part of the 50S ribosomal subunit.

Functionally, binds 23S rRNA and is also seen to make contacts with the A and possibly P site tRNAs. The sequence is that of Large ribosomal subunit protein uL16 from Campylobacter lari (strain RM2100 / D67 / ATCC BAA-1060).